The sequence spans 86 residues: Small ribosomal subunit protein uS15 (86 aa).

Residues 1-10 are compositionally biased toward polar residues; the sequence is MSIDTQSIIE. A disordered region spans residues 1 to 21; sequence MSIDTQSIIENNKRSAHDTGS.

Belongs to the universal ribosomal protein uS15 family. As to quaternary structure, part of the 30S ribosomal subunit. Forms a bridge to the 50S subunit in the 70S ribosome, contacting the 23S rRNA.

In terms of biological role, one of the primary rRNA binding proteins, it binds directly to 16S rRNA where it helps nucleate assembly of the platform of the 30S subunit by binding and bridging several RNA helices of the 16S rRNA. Its function is as follows. Forms an intersubunit bridge (bridge B4) with the 23S rRNA of the 50S subunit in the ribosome. This is Small ribosomal subunit protein uS15 from Xylella fastidiosa (strain 9a5c).